Here is a 102-residue protein sequence, read N- to C-terminus: Small ribosomal subunit protein uS10 (102 aa).

Belongs to the universal ribosomal protein uS10 family. As to quaternary structure, part of the 30S ribosomal subunit.

Functionally, involved in the binding of tRNA to the ribosomes. This is Small ribosomal subunit protein uS10 from Caldanaerobacter subterraneus subsp. tengcongensis (strain DSM 15242 / JCM 11007 / NBRC 100824 / MB4) (Thermoanaerobacter tengcongensis).